The following is a 280-amino-acid chain: NAD(P)H-quinone oxidoreductase subunit K, chloroplastic (280 aa).

[4Fe-4S] cluster contacts are provided by cysteine 65, cysteine 66, cysteine 130, and cysteine 161. The segment at 257–280 (LLKDWKQSNQKQEQNVKMMKEEEA) is disordered.

This sequence belongs to the complex I 20 kDa subunit family. In terms of assembly, NDH is composed of at least 16 different subunits, 5 of which are encoded in the nucleus. [4Fe-4S] cluster serves as cofactor.

It localises to the plastid. The protein localises to the chloroplast thylakoid membrane. The catalysed reaction is a plastoquinone + NADH + (n+1) H(+)(in) = a plastoquinol + NAD(+) + n H(+)(out). It catalyses the reaction a plastoquinone + NADPH + (n+1) H(+)(in) = a plastoquinol + NADP(+) + n H(+)(out). Its function is as follows. NDH shuttles electrons from NAD(P)H:plastoquinone, via FMN and iron-sulfur (Fe-S) centers, to quinones in the photosynthetic chain and possibly in a chloroplast respiratory chain. The immediate electron acceptor for the enzyme in this species is believed to be plastoquinone. Couples the redox reaction to proton translocation, and thus conserves the redox energy in a proton gradient. This chain is NAD(P)H-quinone oxidoreductase subunit K, chloroplastic, found in Staurastrum punctulatum (Green alga).